Reading from the N-terminus, the 167-residue chain is uncharacterized protein (167 aa).

The N-acetyltransferase domain occupies 1-148 (MLIRVEIPID…SAFQVHRLAD (148 aa)).

This sequence belongs to the acetyltransferase family.

This is an uncharacterized protein from Escherichia coli O157:H7.